The following is a 502-amino-acid chain: ATP synthase subunit alpha (502 aa).

169 to 176 (GDRQTGKT) provides a ligand contact to ATP.

This sequence belongs to the ATPase alpha/beta chains family. In terms of assembly, F-type ATPases have 2 components, CF(1) - the catalytic core - and CF(0) - the membrane proton channel. CF(1) has five subunits: alpha(3), beta(3), gamma(1), delta(1), epsilon(1). CF(0) has three main subunits: a(1), b(2) and c(9-12). The alpha and beta chains form an alternating ring which encloses part of the gamma chain. CF(1) is attached to CF(0) by a central stalk formed by the gamma and epsilon chains, while a peripheral stalk is formed by the delta and b chains.

The protein localises to the cell membrane. It catalyses the reaction ATP + H2O + 4 H(+)(in) = ADP + phosphate + 5 H(+)(out). In terms of biological role, produces ATP from ADP in the presence of a proton gradient across the membrane. The alpha chain is a regulatory subunit. The protein is ATP synthase subunit alpha of Desulfitobacterium hafniense (strain Y51).